The sequence spans 527 residues: Glutamate--cysteine ligase (527 aa).

The protein belongs to the glutamate--cysteine ligase type 1 family. Type 1 subfamily.

The catalysed reaction is L-cysteine + L-glutamate + ATP = gamma-L-glutamyl-L-cysteine + ADP + phosphate + H(+). It functions in the pathway sulfur metabolism; glutathione biosynthesis; glutathione from L-cysteine and L-glutamate: step 1/2. The protein is Glutamate--cysteine ligase of Bordetella bronchiseptica (strain ATCC BAA-588 / NCTC 13252 / RB50) (Alcaligenes bronchisepticus).